Consider the following 865-residue polypeptide: Protein translocase subunit SecA (865 aa).

ATP is bound by residues Gln-85, 103-107, and Asp-505; that span reads GEGKT. Residues Cys-847, Cys-849, Cys-858, and His-859 each coordinate Zn(2+).

The protein belongs to the SecA family. As to quaternary structure, monomer and homodimer. Part of the essential Sec protein translocation apparatus which comprises SecA, SecYEG and auxiliary proteins SecDF. Other proteins may also be involved. It depends on Zn(2+) as a cofactor.

Its subcellular location is the cell membrane. It is found in the cytoplasm. The enzyme catalyses ATP + H2O + cellular proteinSide 1 = ADP + phosphate + cellular proteinSide 2.. Part of the Sec protein translocase complex. Interacts with the SecYEG preprotein conducting channel. Has a central role in coupling the hydrolysis of ATP to the transfer of proteins into and across the cell membrane, serving as an ATP-driven molecular motor driving the stepwise translocation of polypeptide chains across the membrane. The protein is Protein translocase subunit SecA of Lactococcus lactis subsp. cremoris (strain SK11).